Here is a 284-residue protein sequence, read N- to C-terminus: uncharacterized protein (284 aa).

This is an uncharacterized protein from Acanthamoeba polyphaga (Amoeba).